The primary structure comprises 193 residues: Penicillin-binding protein activator LpoB (193 aa).

The N-terminal stretch at 1–16 is a signal peptide; sequence MKRYLSVALAALVLTG. Cysteine 17 carries N-palmitoyl cysteine lipidation. Cysteine 17 carries S-diacylglycerol cysteine lipidation. Residues 24–55 form a disordered region; the sequence is EPTTPPVTIEPVTPPVPETPPPVDNVPPPPKM. Positions 35–54 are enriched in pro residues; sequence VTPPVPETPPPVDNVPPPPK.

It belongs to the LpoB family. In terms of assembly, interacts with PBP1b.

Its subcellular location is the cell outer membrane. Functionally, regulator of peptidoglycan synthesis that is essential for the function of penicillin-binding protein 1B (PBP1b). This Yersinia enterocolitica serotype O:8 / biotype 1B (strain NCTC 13174 / 8081) protein is Penicillin-binding protein activator LpoB.